The primary structure comprises 456 residues: ATP synthase subunit beta 1 (456 aa).

152-159 (GGAGVGKS) serves as a coordination point for ATP.

Belongs to the ATPase alpha/beta chains family. In terms of assembly, F-type ATPases have 2 components, CF(1) - the catalytic core - and CF(0) - the membrane proton channel. CF(1) has five subunits: alpha(3), beta(3), gamma(1), delta(1), epsilon(1). CF(0) has three main subunits: a(1), b(2) and c(9-12). The alpha and beta chains form an alternating ring which encloses part of the gamma chain. CF(1) is attached to CF(0) by a central stalk formed by the gamma and epsilon chains, while a peripheral stalk is formed by the delta and b chains.

The protein localises to the cell membrane. The enzyme catalyses ATP + H2O + 4 H(+)(in) = ADP + phosphate + 5 H(+)(out). Its function is as follows. Produces ATP from ADP in the presence of a proton gradient across the membrane. The catalytic sites are hosted primarily by the beta subunits. The polypeptide is ATP synthase subunit beta 1 (Listeria innocua serovar 6a (strain ATCC BAA-680 / CLIP 11262)).